A 392-amino-acid polypeptide reads, in one-letter code: ATP phosphoribosyltransferase regulatory subunit (392 aa).

This sequence belongs to the class-II aminoacyl-tRNA synthetase family. HisZ subfamily. As to quaternary structure, heteromultimer composed of HisG and HisZ subunits.

The protein resides in the cytoplasm. It participates in amino-acid biosynthesis; L-histidine biosynthesis; L-histidine from 5-phospho-alpha-D-ribose 1-diphosphate: step 1/9. Required for the first step of histidine biosynthesis. May allow the feedback regulation of ATP phosphoribosyltransferase activity by histidine. In Listeria monocytogenes serotype 4b (strain F2365), this protein is ATP phosphoribosyltransferase regulatory subunit.